The sequence spans 263 residues: Tryptophan 2,3-dioxygenase (263 aa).

Residues phenylalanine 32–histidine 36, tyrosine 94, and arginine 98 contribute to the substrate site. Histidine 221 serves as a coordination point for heme. Threonine 235 serves as a coordination point for substrate.

This sequence belongs to the tryptophan 2,3-dioxygenase family. As to quaternary structure, homotetramer. The cofactor is heme.

The catalysed reaction is L-tryptophan + O2 = N-formyl-L-kynurenine. It participates in amino-acid degradation; L-tryptophan degradation via kynurenine pathway; L-kynurenine from L-tryptophan: step 1/2. In terms of biological role, heme-dependent dioxygenase that catalyzes the oxidative cleavage of the L-tryptophan (L-Trp) pyrrole ring and converts L-tryptophan to N-formyl-L-kynurenine. Catalyzes the oxidative cleavage of the indole moiety. This is Tryptophan 2,3-dioxygenase from Caulobacter vibrioides (strain ATCC 19089 / CIP 103742 / CB 15) (Caulobacter crescentus).